A 478-amino-acid polypeptide reads, in one-letter code: tRNA(Ile)-lysidine synthase (478 aa).

An ATP-binding site is contributed by 27–32 (SGGSDS).

This sequence belongs to the tRNA(Ile)-lysidine synthase family.

The protein resides in the cytoplasm. The catalysed reaction is cytidine(34) in tRNA(Ile2) + L-lysine + ATP = lysidine(34) in tRNA(Ile2) + AMP + diphosphate + H(+). Ligates lysine onto the cytidine present at position 34 of the AUA codon-specific tRNA(Ile) that contains the anticodon CAU, in an ATP-dependent manner. Cytidine is converted to lysidine, thus changing the amino acid specificity of the tRNA from methionine to isoleucine. The sequence is that of tRNA(Ile)-lysidine synthase from Rickettsia rickettsii (strain Iowa).